A 457-amino-acid polypeptide reads, in one-letter code: tRNA-2-methylthio-N(6)-dimethylallyladenosine synthase (457 aa).

Residues 3-120 (KKVYVKTFGC…LPQMIDARRE (118 aa)) form the MTTase N-terminal domain. The [4Fe-4S] cluster site is built by Cys12, Cys49, Cys83, Cys157, Cys161, and Cys164. The Radical SAM core domain occupies 143–377 (RVEGPSAFVS…QATIEENVAR (235 aa)). In terms of domain architecture, TRAM spans 380–447 (QSMLGKVERI…PHSLRGELVL (68 aa)).

The protein belongs to the methylthiotransferase family. MiaB subfamily. In terms of assembly, monomer. [4Fe-4S] cluster serves as cofactor.

It localises to the cytoplasm. The catalysed reaction is N(6)-dimethylallyladenosine(37) in tRNA + (sulfur carrier)-SH + AH2 + 2 S-adenosyl-L-methionine = 2-methylsulfanyl-N(6)-dimethylallyladenosine(37) in tRNA + (sulfur carrier)-H + 5'-deoxyadenosine + L-methionine + A + S-adenosyl-L-homocysteine + 2 H(+). In terms of biological role, catalyzes the methylthiolation of N6-(dimethylallyl)adenosine (i(6)A), leading to the formation of 2-methylthio-N6-(dimethylallyl)adenosine (ms(2)i(6)A) at position 37 in tRNAs that read codons beginning with uridine. The protein is tRNA-2-methylthio-N(6)-dimethylallyladenosine synthase of Burkholderia pseudomallei (strain 1710b).